The primary structure comprises 302 residues: tRNA pseudouridine synthase B (302 aa).

Aspartate 47 (nucleophile) is an active-site residue.

It belongs to the pseudouridine synthase TruB family. Type 1 subfamily.

The catalysed reaction is uridine(55) in tRNA = pseudouridine(55) in tRNA. In terms of biological role, responsible for synthesis of pseudouridine from uracil-55 in the psi GC loop of transfer RNAs. This chain is tRNA pseudouridine synthase B, found in Ruegeria sp. (strain TM1040) (Silicibacter sp.).